The sequence spans 590 residues: Arginine--tRNA ligase (590 aa).

The 'HIGH' region motif lies at 130 to 140 (ANPTGPMHVGH).

Belongs to the class-I aminoacyl-tRNA synthetase family. In terms of assembly, monomer.

It localises to the cytoplasm. The catalysed reaction is tRNA(Arg) + L-arginine + ATP = L-arginyl-tRNA(Arg) + AMP + diphosphate. This is Arginine--tRNA ligase from Methylobacterium nodulans (strain LMG 21967 / CNCM I-2342 / ORS 2060).